The following is a 269-amino-acid chain: Probable membrane transporter protein YfcA (269 aa).

At Met1–Leu7 the chain is on the periplasmic side. The chain crosses the membrane as a helical span at residues Phe8 to Ile28. Residues Asp29 to Ser30 lie on the Cytoplasmic side of the membrane. A helical transmembrane segment spans residues Ile31 to Ala51. Residues Asn52–Lys84 are Periplasmic-facing. Residues Leu85–Gln105 traverse the membrane as a helical segment. Residues Ala106–Gln111 lie on the Cytoplasmic side of the membrane. A helical transmembrane segment spans residues Ile112–Glu132. At Glu133–Asp156 the chain is on the periplasmic side. A helical transmembrane segment spans residues Gly157–Phe177. The Cytoplasmic portion of the chain corresponds to Asn178 to Gly197. A helical membrane pass occupies residues Leu198 to Gly218. At Gln219–Asn269 the chain is on the periplasmic side.

Belongs to the 4-toluene sulfonate uptake permease (TSUP) (TC 2.A.102) family.

The protein resides in the cell inner membrane. The protein is Probable membrane transporter protein YfcA (yfcA) of Escherichia coli O157:H7.